The primary structure comprises 311 residues: Coproporphyrin III ferrochelatase 1 (311 aa).

Fe-coproporphyrin III contacts are provided by residues Tyr12, Arg29, 45–46 (RY), Ser53, and Tyr124. Fe(2+) is bound by residues His182 and Glu263.

Belongs to the ferrochelatase family.

It is found in the cytoplasm. The catalysed reaction is Fe-coproporphyrin III + 2 H(+) = coproporphyrin III + Fe(2+). It functions in the pathway porphyrin-containing compound metabolism; protoheme biosynthesis. Its function is as follows. Involved in coproporphyrin-dependent heme b biosynthesis. Catalyzes the insertion of ferrous iron into coproporphyrin III to form Fe-coproporphyrin III. The sequence is that of Coproporphyrin III ferrochelatase 1 from Bacillus cereus (strain ATCC 10987 / NRS 248).